The following is a 396-amino-acid chain: Phosphoglycerate kinase (396 aa).

Residues 21–23 (DFN), Arg-37, 60–63 (HLGR), Arg-121, and Arg-154 each bind substrate. ATP contacts are provided by residues Lys-205, Gly-296, Glu-327, and 353–356 (GGDS).

The protein belongs to the phosphoglycerate kinase family. As to quaternary structure, monomer.

It is found in the cytoplasm. It carries out the reaction (2R)-3-phosphoglycerate + ATP = (2R)-3-phospho-glyceroyl phosphate + ADP. It functions in the pathway carbohydrate degradation; glycolysis; pyruvate from D-glyceraldehyde 3-phosphate: step 2/5. The chain is Phosphoglycerate kinase from Anaeromyxobacter sp. (strain K).